Here is a 324-residue protein sequence, read N- to C-terminus: Acetyl-coenzyme A carboxylase carboxyl transferase subunit beta (324 aa).

Over residues 1–16 (MTKNNNDLSNSSSNPP) the composition is skewed to low complexity. The tract at residues 1-51 (MTKNNNDLSNSSSNPPSNRPVAGKEAELEIQRETHAAQSGQSESWLSRPIP) is disordered. A compositionally biased stretch (basic and acidic residues) spans 22 to 35 (AGKEAELEIQRETH). Positions 36-45 (AAQSGQSESW) are enriched in polar residues. In terms of domain architecture, CoA carboxyltransferase N-terminal spans 68–324 (PSTECPQCHS…YRLLAKLTHV (257 aa)). 4 residues coordinate Zn(2+): cysteine 72, cysteine 75, cysteine 91, and cysteine 94. The C4-type zinc-finger motif lies at 72–94 (CPQCHSMITNTALIFNAYVCPHC).

This sequence belongs to the AccD/PCCB family. In terms of assembly, acetyl-CoA carboxylase is a heterohexamer composed of biotin carboxyl carrier protein (AccB), biotin carboxylase (AccC) and two subunits each of ACCase subunit alpha (AccA) and ACCase subunit beta (AccD). Requires Zn(2+) as cofactor.

It is found in the cytoplasm. The catalysed reaction is N(6)-carboxybiotinyl-L-lysyl-[protein] + acetyl-CoA = N(6)-biotinyl-L-lysyl-[protein] + malonyl-CoA. The protein operates within lipid metabolism; malonyl-CoA biosynthesis; malonyl-CoA from acetyl-CoA: step 1/1. In terms of biological role, component of the acetyl coenzyme A carboxylase (ACC) complex. Biotin carboxylase (BC) catalyzes the carboxylation of biotin on its carrier protein (BCCP) and then the CO(2) group is transferred by the transcarboxylase to acetyl-CoA to form malonyl-CoA. The protein is Acetyl-coenzyme A carboxylase carboxyl transferase subunit beta of Psychrobacter sp. (strain PRwf-1).